The following is an 85-amino-acid chain: Protein U62 (85 aa).

The protein belongs to the herpesviridae UL91 family.

This chain is Protein U62 (U62), found in Homo sapiens (Human).